Reading from the N-terminus, the 389-residue chain is Serpin-Z3 (389 aa).

Positions 337–361 (GTEAAAVSVAIMMPQCLMRNPDFVA) are RCL.

This sequence belongs to the serpin family.

In terms of biological role, probable serine protease inhibitor. This is Serpin-Z3 from Arabidopsis thaliana (Mouse-ear cress).